A 498-amino-acid polypeptide reads, in one-letter code: Pre-glycoprotein polyprotein GP complex (498 aa).

Residue Gly-2 is the site of N-myristoyl glycine; by host attachment. The Extracellular segment spans residues 2-17; sequence GQIVTMFEALPHIIDE. A helical membrane pass occupies residues 18 to 33; it reads VINIVIIVLIIITSIK. The Cytoplasmic segment spans residues 34–58; that stretch reads AVYNFATCGILALVSFLFLAGRSCG. Residue Cys-57 participates in Zn(2+) binding. The Extracellular portion of the chain corresponds to 59-438; the sequence is MYGLNGPDIY…QGSTPLALMD (380 aa). Residues Asn-85, Asn-95, Asn-114, Asn-124, and Asn-171 are each glycosylated (N-linked (GlcNAc...) asparagine; by host). 6 disulfides stabilise this stretch: Cys-92–Cys-239, Cys-123–Cys-160, Cys-184–Cys-220, Cys-285–Cys-298, Cys-307–Cys-316, and Cys-370–Cys-391. N-linked (GlcNAc...) asparagine; by host glycosylation is present at Asn-232. N-linked (GlcNAc...) asparagine; by host glycosylation is found at Asn-371, Asn-396, and Asn-401. The chain crosses the membrane as a helical span at residues 439-459; that stretch reads LLMFSTSAYLISIFLHFVRIP. The Cytoplasmic segment spans residues 460-498; sequence THRHIKGGSCPKPHRLTNKGICSCGAFKVPGVKTIWKRR. Zn(2+)-binding residues include His-461, His-463, Cys-469, His-473, Cys-481, and Cys-483.

It belongs to the arenaviridae GPC protein family. In terms of assembly, interacts with glycoprotein G2. Part of the GP complex (GP-C) together with glycoprotein G1 and glycoprotein G2. The GP-complex interacts with protein Z, which interacts with ribonucleocapsid; these interactions may induce virion budding. Homotrimer; disulfide-linked. In pre-fusion state, G1 homotrimers bind G2 homotrimers via ionic interactions. Part of the GP complex (GP-C) together with glycoprotein G2 and the stable signal peptide. Interacts with the primary host receptor DAG1 on the cell surface. The GP-complex interacts with protein Z, which interacts with ribonucleocapsid; these interactions may induce virion budding. As to quaternary structure, homotrimer. Interacts with the stable signal peptide. In pre-fusion state, G2 homotrimers bind G1 homotrimers via ionic interactions. Part of the GP complex (GP-C) together with glycoprotein G1 and the stable signal peptide. Acidification in the endosome triggers rearrangements, which ultimately leads to a 6 helix bundle formed by the two heptad repeat domains (HR1 and HR2) in post-fusion state. The GP-complex interacts with protein Z, which interacts with ribonucleocapsid; these interactions may induce virion budding. Post-translationally, specific enzymatic cleavages in vivo yield mature proteins. GP-C polyprotein is cleaved in the endoplasmic reticulum by the host protease MBTPS1. Only cleaved glycoprotein is incorporated into virions. In terms of processing, the SSP remains stably associated with the GP complex following cleavage by signal peptidase and plays crucial roles in the trafficking of GP through the secretory pathway. Myristoylation is necessary for GP2-mediated fusion activity.

The protein resides in the virion membrane. Its subcellular location is the host endoplasmic reticulum membrane. It is found in the host Golgi apparatus membrane. It localises to the host cell membrane. Functionally, functions as a cleaved signal peptide that is retained as the third component of the GP complex (GP-C). Helps to stabilize the spike complex in its native conformation. The SSP is required for efficient glycoprotein expression, post-translational maturation cleavage of G1 and G2, glycoprotein transport to the cell surface plasma membrane, formation of infectious virus particles, and acid pH-dependent glycoprotein-mediated cell fusion. Its function is as follows. Forms the virion spikes together with glycoprotein G2. The glycoprotein spike trimers are connected to the underlying matrix. Interacts with the host receptor. Mediates virus attachment to the host primary receptor alpha-dystroglycan DAG1 (alpha-DG) at the cell surface. Down-modulates host DAG1. In terms of biological role, forms the virion spikes together with glycoprotein G1. The glycoprotein spike trimers are connected to the underlying matrix. Class I viral fusion protein that directs fusion of viral and host endosomal membranes, leading to delivery of the nucleocapsid into the cytoplasm. Membrane fusion is mediated by irreversible conformational changes induced by acidification. This chain is Pre-glycoprotein polyprotein GP complex, found in Homo sapiens (Human).